The primary structure comprises 182 residues: NADH-quinone oxidoreductase subunit I (182 aa).

4Fe-4S ferredoxin-type domains lie at 52–82 (LTRD…LQKA) and 92–121 (DFFR…LTPD). Residues cysteine 62, cysteine 65, cysteine 68, cysteine 72, cysteine 101, cysteine 104, cysteine 107, and cysteine 111 each coordinate [4Fe-4S] cluster.

The protein belongs to the complex I 23 kDa subunit family. As to quaternary structure, NDH-1 is composed of 13 different subunits. Subunits NuoA, H, J, K, L, M, N constitute the membrane sector of the complex. Requires [4Fe-4S] cluster as cofactor.

It localises to the cell inner membrane. It catalyses the reaction a quinone + NADH + 5 H(+)(in) = a quinol + NAD(+) + 4 H(+)(out). Its function is as follows. NDH-1 shuttles electrons from NADH, via FMN and iron-sulfur (Fe-S) centers, to quinones in the respiratory chain. The immediate electron acceptor for the enzyme in this species is believed to be ubiquinone. Couples the redox reaction to proton translocation (for every two electrons transferred, four hydrogen ions are translocated across the cytoplasmic membrane), and thus conserves the redox energy in a proton gradient. This Pseudomonas savastanoi pv. phaseolicola (strain 1448A / Race 6) (Pseudomonas syringae pv. phaseolicola (strain 1448A / Race 6)) protein is NADH-quinone oxidoreductase subunit I.